The following is a 408-amino-acid chain: Arginine deiminase (408 aa).

Catalysis depends on C397, which acts as the Amidino-cysteine intermediate.

It belongs to the arginine deiminase family.

It is found in the cytoplasm. The catalysed reaction is L-arginine + H2O = L-citrulline + NH4(+). The protein operates within amino-acid degradation; L-arginine degradation via ADI pathway; carbamoyl phosphate from L-arginine: step 1/2. In Listeria innocua serovar 6a (strain ATCC BAA-680 / CLIP 11262), this protein is Arginine deiminase.